The sequence spans 319 residues: ATP-dependent 6-phosphofructokinase (319 aa).

Gly11 is an ATP binding site. 21-25 (RAVVR) lines the ADP pocket. ATP-binding positions include 72-73 (RC) and 102-105 (GDGS). Asp103 contacts Mg(2+). Residue 125-127 (TID) coordinates substrate. Asp127 acts as the Proton acceptor in catalysis. Arg154 serves as a coordination point for ADP. Substrate contacts are provided by residues Arg162 and 169–171 (MGR). ADP-binding positions include 185–187 (GAE), Arg211, and 213–215 (KKH). Substrate-binding positions include Glu222, Arg243, and 249–252 (HIQR).

It belongs to the phosphofructokinase type A (PFKA) family. ATP-dependent PFK group I subfamily. Prokaryotic clade 'B1' sub-subfamily. Homotetramer. Mg(2+) is required as a cofactor.

The protein resides in the cytoplasm. It catalyses the reaction beta-D-fructose 6-phosphate + ATP = beta-D-fructose 1,6-bisphosphate + ADP + H(+). Its pathway is carbohydrate degradation; glycolysis; D-glyceraldehyde 3-phosphate and glycerone phosphate from D-glucose: step 3/4. Allosterically activated by ADP and other diphosphonucleosides, and allosterically inhibited by phosphoenolpyruvate. Functionally, catalyzes the phosphorylation of D-fructose 6-phosphate to fructose 1,6-bisphosphate by ATP, the first committing step of glycolysis. In Bacillus velezensis (strain DSM 23117 / BGSC 10A6 / LMG 26770 / FZB42) (Bacillus amyloliquefaciens subsp. plantarum), this protein is ATP-dependent 6-phosphofructokinase.